The sequence spans 152 residues: Transcriptional regulator MraZ (152 aa).

2 SpoVT-AbrB domains span residues 5-52 and 81-124; these read ATLV…PLPE and ASEC…DETT.

Belongs to the MraZ family. In terms of assembly, forms oligomers.

Its subcellular location is the cytoplasm. The protein resides in the nucleoid. In terms of biological role, negatively regulates its own expression and that of the subsequent genes in the proximal part of the division and cell wall (dcw) gene cluster. Acts by binding directly to DNA. May also regulate the expression of genes outside the dcw cluster. The polypeptide is Transcriptional regulator MraZ (Shigella dysenteriae serotype 1 (strain Sd197)).